Consider the following 243-residue polypeptide: Probable transcriptional regulatory protein Patl_0550 (243 aa).

Belongs to the TACO1 family.

Its subcellular location is the cytoplasm. The polypeptide is Probable transcriptional regulatory protein Patl_0550 (Pseudoalteromonas atlantica (strain T6c / ATCC BAA-1087)).